The chain runs to 193 residues: Major intrinsically disordered NOTCH2-binding receptor 1-like homolog (193 aa).

The residue at position 82 (Ser-82) is a Phosphoserine. Asn-128 carries an N-linked (GlcNAc...) asparagine glycan. Residues 172 to 192 form a helical membrane-spanning segment; it reads GLILLLVASILVTIVTLSTIF.

This sequence belongs to the MINAR family. As to quaternary structure, interacts with NOTCH2. Widely expressed in the cortex and Purkinje cells of cerebellum. Expressed in the inner ear, mainly in the hair cells, spiral ganglia, the spiral limbus, and the stria vascularis.

It localises to the lysosome membrane. The protein resides in the endoplasmic reticulum membrane. Functionally, binds cholesterol and may regulate the distribution and homeostasis of cholesterol in hair cells. May play a role in angiogenesis. This chain is Major intrinsically disordered NOTCH2-binding receptor 1-like homolog, found in Mus musculus (Mouse).